The primary structure comprises 235 residues: Type III pantothenate kinase (235 aa).

6 to 13 is a binding site for ATP; it reads DVGNTSLK. Residues Y79 and 86-89 contribute to the substrate site; that span reads GIDR. The active-site Proton acceptor is D88. D109 provides a ligand contact to K(+). T112 contacts ATP. T164 provides a ligand contact to substrate.

This sequence belongs to the type III pantothenate kinase family. In terms of assembly, homodimer. The cofactor is NH4(+). K(+) serves as cofactor.

It localises to the cytoplasm. It catalyses the reaction (R)-pantothenate + ATP = (R)-4'-phosphopantothenate + ADP + H(+). Its pathway is cofactor biosynthesis; coenzyme A biosynthesis; CoA from (R)-pantothenate: step 1/5. In terms of biological role, catalyzes the phosphorylation of pantothenate (Pan), the first step in CoA biosynthesis. The polypeptide is Type III pantothenate kinase (Pseudoalteromonas translucida (strain TAC 125)).